A 537-amino-acid chain; its full sequence is Lysine--tRNA ligase (537 aa).

The 'HIGH' region motif lies at 30 to 38 (PSGNIHIGN). The 'KMSKS' region motif lies at 276 to 280 (AMSSS).

This sequence belongs to the class-I aminoacyl-tRNA synthetase family.

It localises to the cytoplasm. The enzyme catalyses tRNA(Lys) + L-lysine + ATP = L-lysyl-tRNA(Lys) + AMP + diphosphate. The polypeptide is Lysine--tRNA ligase (Methanosarcina barkeri).